Consider the following 516-residue polypeptide: BAR/IMD domain-containing adapter protein 2-like 1 (516 aa).

An IMD domain is found at 1–249; sequence MSRGPEEVNR…MNMIEEIKTP (249 aa). Residues 115 to 148 adopt a coiled-coil conformation; that stretch reads MNATLKRYQAEHRNKLDSLEKSQAELKKIRRKSQ. Phosphothreonine is present on residues Thr248 and Thr257. Phosphoserine occurs at positions 261 and 281. Residues 303 to 328 are disordered; that stretch reads NPATAGQSAEKTNNSTANTGDDPSLQ. The residue at position 332 (Ser332) is a Phosphoserine. Residues 340–403 enclose the SH3 domain; it reads MKKQKVKTIF…PSSYTKLLEE (64 aa). The residue at position 413 (Thr413) is a Phosphothreonine. 3 positions are modified to phosphoserine: Ser415, Ser421, and Ser423. Residues 454–516 form a disordered region; the sequence is ADAAKIPSTS…TNDRSAPIIR (63 aa). The span at 474 to 485 shows a compositional bias: polar residues; it reads ATSTSPSDSNGT. Residues 488–516 form a binds F-actin region; that stretch reads PPFLSGENPFATVKLRPTVTNDRSAPIIR.

As to quaternary structure, interacts with RAC1. Binds to F-actin. Interacts with FASLG. In terms of processing, phosphorylated on tyrosine in response to insulin.

The protein localises to the cytoplasm. Its subcellular location is the cytoskeleton. In terms of biological role, may function as adapter protein. Involved in the formation of clusters of actin bundles. Plays a role in the reorganization of the actin cytoskeleton in response to bacterial infection. The sequence is that of BAR/IMD domain-containing adapter protein 2-like 1 (Baiap2l1) from Rattus norvegicus (Rat).